The chain runs to 438 residues: ATP-dependent RNA helicase RhlB (438 aa).

A Q motif motif is present at residues 9-37 (QRFADLPLHPEVKQALAENGFEFCTPIQA). The 180-residue stretch at 40–219 (LPVLLQSKDI…YDHMNEPVKV (180 aa)) folds into the Helicase ATP-binding domain. 53–60 (AQTGTGKT) is a binding site for ATP. A DEAD box motif is present at residues 165–168 (DEAD). The Helicase C-terminal domain maps to 243–390 (KMRLLLTLIE…VSNYDSEALL (148 aa)). Residues 395–438 (TPAKIHRKHPSGTRNLRDRSGTSRPGAQRSGARPPRHDRTRRHS) are disordered. The span at 428–438 (PPRHDRTRRHS) shows a compositional bias: basic residues.

It belongs to the DEAD box helicase family. RhlB subfamily. Component of the RNA degradosome, which is a multiprotein complex involved in RNA processing and mRNA degradation.

The protein localises to the cytoplasm. The catalysed reaction is ATP + H2O = ADP + phosphate + H(+). In terms of biological role, DEAD-box RNA helicase involved in RNA degradation. Has RNA-dependent ATPase activity and unwinds double-stranded RNA. The polypeptide is ATP-dependent RNA helicase RhlB (Shewanella baltica (strain OS223)).